Consider the following 451-residue polypeptide: Trigger factor (451 aa).

The region spanning 173 to 258 (GDRVTLDFVG…LKKIEWAHLP (86 aa)) is the PPIase FKBP-type domain.

This sequence belongs to the FKBP-type PPIase family. Tig subfamily.

The protein resides in the cytoplasm. It carries out the reaction [protein]-peptidylproline (omega=180) = [protein]-peptidylproline (omega=0). Functionally, involved in protein export. Acts as a chaperone by maintaining the newly synthesized protein in an open conformation. Functions as a peptidyl-prolyl cis-trans isomerase. The sequence is that of Trigger factor from Cupriavidus necator (strain ATCC 17699 / DSM 428 / KCTC 22496 / NCIMB 10442 / H16 / Stanier 337) (Ralstonia eutropha).